We begin with the raw amino-acid sequence, 88 residues long: MLDTKFDELMDFPCAFPFKVVGDAHEALTDRVVAVVQKHAPGDYAPTTKASSKGSYYSITIRVTVTSKDHIETLYTELAAIEGVRRVL.

Belongs to the UPF0250 family.

The protein is UPF0250 protein Sputcn32_2874 of Shewanella putrefaciens (strain CN-32 / ATCC BAA-453).